A 197-amino-acid chain; its full sequence is Recombination protein RecR (197 aa).

Residues 57-72 (CSVCFAITEDDPCWIC) form a C4-type zinc finger. One can recognise a Toprim domain in the interval 79-174 (GTICVVEEPQ…KVTRLAHGIP (96 aa)).

Belongs to the RecR family.

In terms of biological role, may play a role in DNA repair. It seems to be involved in an RecBC-independent recombinational process of DNA repair. It may act with RecF and RecO. The chain is Recombination protein RecR from Citrifermentans bemidjiense (strain ATCC BAA-1014 / DSM 16622 / JCM 12645 / Bem) (Geobacter bemidjiensis).